Here is a 390-residue protein sequence, read N- to C-terminus: LIM/homeobox protein Lhx4 (390 aa).

LIM zinc-binding domains are found at residues 28-87 and 88-150; these read PQCA…RFGT and KCTA…AKQN. The homeobox DNA-binding region spans 157–216; it reads AKRPRTTITAKQLETLKNAYKNSPKPARHVREQLSSETGLDMRVVQVWFQNRRAKEKRLK. Residues 161–181 form an interaction with DNA region; it reads RTTITAKQLETLKNAYKNSPK. Residues 199–211 form an interaction with 5-mCpG DNA region; that stretch reads RVVQVWFQNRRAK. Disordered regions lie at residues 231 to 253 and 355 to 390; these read VKRS…GVSD and MAGG…HPPF.

In terms of tissue distribution, transient expression in ventrolateral regions of the developing neural tube and hindbrain.

The protein resides in the nucleus. Its function is as follows. May play a critical role in the development of respiratory control mechanisms and in the normal growth and maturation of the lung. Binds preferentially to methylated DNA. The sequence is that of LIM/homeobox protein Lhx4 (Lhx4) from Mus musculus (Mouse).